Consider the following 478-residue polypeptide: Serralysin C (478 aa).

Positions 1 to 17 are excised as a propeptide; the sequence is MEKNLSSRDDDALHSLS. Position 187 (His-187) interacts with Zn(2+). Glu-188 is a catalytic residue. Zn(2+) contacts are provided by His-191 and Tyr-227. Residues Arg-264, Gly-266, Asp-296, Gly-298, Gly-299, Asp-301, Thr-338, Glu-340, Gly-345, Gly-347, Asp-349, Asn-354, Ala-356, Asn-358, Gly-362, Gly-363, Ala-364, Gly-365, Asp-367, Gly-371, Gly-372, Gly-374, Asp-376, Gly-380, Gly-381, Gly-383, Asp-385, Asp-394, Asp-401, and Asp-411 each coordinate Ca(2+). 2 Hemolysin-type calcium-binding repeats span residues 343–360 and 361–378; these read IGGS…DNTL and RGGA…ADRL.

It belongs to the peptidase M10B family. Requires Ca(2+) as cofactor. It depends on Zn(2+) as a cofactor.

It localises to the secreted. It carries out the reaction Preferential cleavage of bonds with hydrophobic residues in P1'.. This chain is Serralysin C (prtC), found in Dickeya chrysanthemi (Pectobacterium chrysanthemi).